The following is a 296-amino-acid chain: Protoheme IX farnesyltransferase (296 aa).

The Cytoplasmic portion of the chain corresponds to 1–9 (MMFKQYLQV). A helical membrane pass occupies residues 10-28 (TKPGIIFGNLISVIGGFLL). Residues 29–37 (ASKGSIDYP) are Periplasmic-facing. A helical transmembrane segment spans residues 38–56 (LFIYTLVGVSLVVASGCVF). Over 57–78 (NNYIDRDIDRKMERTKNRVLVK) the chain is Cytoplasmic. Residues 79–97 (GLISPAVSLVYATLLGIAG) form a helical membrane-spanning segment. The Periplasmic portion of the chain corresponds to 98-107 (FMLLWFGANP). The helical transmembrane segment at 108-126 (LACWLGVMGFVVYVGVYSL) threads the bilayer. The Cytoplasmic segment spans residues 127 to 197 (YMKRHSVYGT…YQAANIPVLP (71 aa)). The chain crosses the membrane as a helical span at residues 198-216 (VVKGISVAKNHITLYIIAF). The Periplasmic segment spans residues 217–228 (AVATLMLSLGGY). Residues 229–247 (AGYKYLVVAAAVSVWWLGM) form a helical membrane-spanning segment. Over 248–268 (ALRGYKVADDRIWARKLFGFS) the chain is Cytoplasmic. A helical membrane pass occupies residues 269–287 (IIAITALSVMMSVDFMVPD). At 288–296 (SHTLLAAVW) the chain is on the periplasmic side.

Belongs to the UbiA prenyltransferase family. Protoheme IX farnesyltransferase subfamily.

It localises to the cell inner membrane. It catalyses the reaction heme b + (2E,6E)-farnesyl diphosphate + H2O = Fe(II)-heme o + diphosphate. The protein operates within porphyrin-containing compound metabolism; heme O biosynthesis; heme O from protoheme: step 1/1. Functionally, converts heme B (protoheme IX) to heme O by substitution of the vinyl group on carbon 2 of heme B porphyrin ring with a hydroxyethyl farnesyl side group. The protein is Protoheme IX farnesyltransferase of Shigella flexneri.